The primary structure comprises 213 residues: ABA-inducible protein PHV A1 (213 aa).

Disordered stretches follow at residues 1–158 and 182–213; these read MASN…KDKT and NTLG…TRNH. Positions 13–23 are enriched in basic and acidic residues; it reads GETKARTEEKT. LEA 11-mer repeat repeat units follow at residues 27–37, 38–48, 49–59, 60–70, 78–88, 89–99, 111–121, 122–132, and 133–143; these read MGATKQKAGQT, TEATKQKAGET, AEATKQKTGET, AEAAKQKAAEA, AQAAKDKTYET, AQAAKERAAQG, TEAAKQKAAET, TEAAKQKAAEA, and TEAAKQKASDT. Positions 27–143 are 11 X 11 AA tandem repeats of T-E-A-A-K-Q-K-A-A-E-T; sequence MGATKQKAGQ…EAAKQKASDT (117 aa). Basic and acidic residues-rich tracts occupy residues 41 to 74, 81 to 98, and 109 to 140; these read TKQK…KDKT, AKDK…RAAQ, and EKTE…KQKA. Low complexity predominate over residues 193–213; the sequence is ATKDATTGATVKDTTTTTRNH.

Belongs to the LEA type 4 family.

The sequence is that of ABA-inducible protein PHV A1 (HVA1) from Hordeum vulgare (Barley).